Here is a 167-residue protein sequence, read N- to C-terminus: Ammonium/H(+) antiporter subunit AmhM (167 aa).

The 85-residue stretch at 79 to 163 (IDRIKLIRKQ…IQKFEELCAC (85 aa)) folds into the RCK C-terminal domain.

Interacts with AmhT.

The protein localises to the cell membrane. Functionally, modulates the activity of the ammonium/proton antiporter AmhT. The protein is Ammonium/H(+) antiporter subunit AmhM (amhM) of Alkalihalophilus pseudofirmus (strain ATCC BAA-2126 / JCM 17055 / OF4) (Bacillus pseudofirmus).